Here is a 549-residue protein sequence, read N- to C-terminus: Guanine nucleotide-binding protein-like 3 (549 aa).

Residues 1 to 45 show a composition bias toward basic residues; that stretch reads MKRPKLKKASKRMTCHKRYKIQKKVREHHRKLRKEAKKRGHKKPR. 2 disordered regions span residues 1-56 and 73-104; these read MKRP…SAPF and ELKQ…SNVE. Positions 2–46 are basic; sequence KRPKLKKASKRMTCHKRYKIQKKVREHHRKLRKEAKKRGHKKPRK. Residues 56-95 are a coiled coil; the sequence is FKEALLREAELRKQRLEELKQQQKLDRQKELEKKRKLETN. Residues 73-96 show a composition bias toward basic and acidic residues; the sequence is ELKQQQKLDRQKELEKKRKLETNP. Lys79 is subject to N6-acetyllysine. Glycyl lysine isopeptide (Lys-Gly) (interchain with G-Cter in SUMO2) cross-links involve residues Lys91 and Lys99. Phosphoserine is present on Ser101. Residues Lys114, Lys179, Lys196, Lys253, Lys267, and Lys275 each participate in a glycyl lysine isopeptide (Lys-Gly) (interchain with G-Cter in SUMO2) cross-link. The region spanning 131-312 is the CP-type G domain; sequence CQELKKVIEA…IIDSPSFIVS (182 aa). Position 178-181 (178-181) interacts with GTP; it reads NKSD. 261–268 is a GTP binding site; that stretch reads GFPNVGKS. Positions 282-456 are intermediate; sequence VGVSMGLTRS…HLANSILFQS (175 aa). A GTP-binding site is contributed by 305–308; that stretch reads DSPS. Positions 465-543 are acidic; it reads EEKDIHEELP…KIIEEDDAYD (79 aa). A compositionally biased stretch (basic and acidic residues) spans 474–483; sequence PKRKERKQEE. The disordered stretch occupies residues 474 to 532; that stretch reads PKRKERKQEEREDDKDSDQETVDEEVDENSSGMFAAEETGEALSEETTAGEQSTRSFIL. The span at 484-501 shows a compositional bias: acidic residues; that stretch reads REDDKDSDQETVDEEVDE. Phosphoserine is present on residues Ser490, Ser504, Ser517, and Ser529. A compositionally biased stretch (polar residues) spans 518–529; it reads EETTAGEQSTRS.

It belongs to the TRAFAC class YlqF/YawG GTPase family. In terms of assembly, interacts with MDM2; this interaction stabilizes MDM2. Interaction with MDM2 occurs in the nucleoplasm and is triggered by a nucleolar release mechanism, such as mitosis-induced nucleolar disassembly. Indirectly interacts with TP53, via MDM2-binding. Interacts with TSC22D1 isoform 2. Increased levels in lung tissue in cancer patients.

It is found in the nucleus. It localises to the nucleolus. Functionally, may be required to maintain the proliferative capacity of stem cells. Stabilizes MDM2 by preventing its ubiquitination, and hence proteasomal degradation. The polypeptide is Guanine nucleotide-binding protein-like 3 (GNL3) (Homo sapiens (Human)).